We begin with the raw amino-acid sequence, 342 residues long: NAD kinase (342 aa).

Aspartate 66 acts as the Proton acceptor in catalysis. Residues 66–67 (DG), arginine 71, 141–142 (ND), lysine 152, aspartate 171, 182–187 (TAYAFS), and alanine 206 contribute to the NAD(+) site.

Belongs to the NAD kinase family. Requires a divalent metal cation as cofactor.

The protein localises to the cytoplasm. It catalyses the reaction NAD(+) + ATP = ADP + NADP(+) + H(+). Functionally, involved in the regulation of the intracellular balance of NAD and NADP, and is a key enzyme in the biosynthesis of NADP. Catalyzes specifically the phosphorylation on 2'-hydroxyl of the adenosine moiety of NAD to yield NADP. This is NAD kinase from Bifidobacterium longum (strain NCC 2705).